We begin with the raw amino-acid sequence, 127 residues long: Fumarate reductase subunit C (127 aa).

The next 3 membrane-spanning stretches (helical) occupy residues 30–50 (ATVL…GCLV), 58–78 (GWLA…ALLG), and 107–127 (IIVL…LIVV).

This sequence belongs to the FrdC family. As to quaternary structure, part of an enzyme complex containing four subunits: a flavoprotein (FrdA), an iron-sulfur protein (FrdB), and two hydrophobic anchor proteins (FrdC and FrdD).

It is found in the cell inner membrane. Anchors the catalytic components of the fumarate reductase complex to the cell membrane, binds quinones. This is Fumarate reductase subunit C from Vibrio parahaemolyticus serotype O3:K6 (strain RIMD 2210633).